A 152-amino-acid polypeptide reads, in one-letter code: Deoxyuridine 5'-triphosphate nucleotidohydrolase (152 aa).

Residues 72 to 74, asparagine 85, and 89 to 91 each bind substrate; these read RSG and TID.

It belongs to the dUTPase family. Requires Mg(2+) as cofactor.

The enzyme catalyses dUTP + H2O = dUMP + diphosphate + H(+). It participates in pyrimidine metabolism; dUMP biosynthesis; dUMP from dCTP (dUTP route): step 2/2. In terms of biological role, this enzyme is involved in nucleotide metabolism: it produces dUMP, the immediate precursor of thymidine nucleotides and it decreases the intracellular concentration of dUTP so that uracil cannot be incorporated into DNA. In Afipia carboxidovorans (strain ATCC 49405 / DSM 1227 / KCTC 32145 / OM5) (Oligotropha carboxidovorans), this protein is Deoxyuridine 5'-triphosphate nucleotidohydrolase.